Consider the following 416-residue polypeptide: Serine hydroxymethyltransferase (416 aa).

Residues Leu121 and 125–127 (GHL) each bind (6S)-5,6,7,8-tetrahydrofolate. Lys229 is subject to N6-(pyridoxal phosphate)lysine.

The protein belongs to the SHMT family. In terms of assembly, homodimer. Pyridoxal 5'-phosphate serves as cofactor.

It localises to the cytoplasm. It carries out the reaction (6R)-5,10-methylene-5,6,7,8-tetrahydrofolate + glycine + H2O = (6S)-5,6,7,8-tetrahydrofolate + L-serine. It functions in the pathway one-carbon metabolism; tetrahydrofolate interconversion. It participates in amino-acid biosynthesis; glycine biosynthesis; glycine from L-serine: step 1/1. In terms of biological role, catalyzes the reversible interconversion of serine and glycine with tetrahydrofolate (THF) serving as the one-carbon carrier. This reaction serves as the major source of one-carbon groups required for the biosynthesis of purines, thymidylate, methionine, and other important biomolecules. Also exhibits THF-independent aldolase activity toward beta-hydroxyamino acids, producing glycine and aldehydes, via a retro-aldol mechanism. The polypeptide is Serine hydroxymethyltransferase (Neisseria meningitidis serogroup B (strain ATCC BAA-335 / MC58)).